The sequence spans 372 residues: Phospho-2-dehydro-3-deoxyheptonate aldolase, tyrosine-inhibited (372 aa).

Belongs to the class-I DAHP synthase family.

The protein resides in the cytoplasm. It localises to the nucleus. The enzyme catalyses D-erythrose 4-phosphate + phosphoenolpyruvate + H2O = 7-phospho-2-dehydro-3-deoxy-D-arabino-heptonate + phosphate. The protein operates within metabolic intermediate biosynthesis; chorismate biosynthesis; chorismate from D-erythrose 4-phosphate and phosphoenolpyruvate: step 1/7. Functionally, stereospecific condensation of phosphoenolpyruvate (PEP) and D-erythrose-4-phosphate (E4P) giving rise to 3-deoxy-D-arabino-heptulosonate-7-phosphate (DAHP). This is Phospho-2-dehydro-3-deoxyheptonate aldolase, tyrosine-inhibited (aro4) from Schizosaccharomyces pombe (strain 972 / ATCC 24843) (Fission yeast).